The following is a 263-amino-acid chain: 5'-nucleotidase SurE (263 aa).

Positions 8, 9, 40, and 98 each coordinate a divalent metal cation.

It belongs to the SurE nucleotidase family. It depends on a divalent metal cation as a cofactor.

The protein resides in the cytoplasm. It catalyses the reaction a ribonucleoside 5'-phosphate + H2O = a ribonucleoside + phosphate. Functionally, nucleotidase that shows phosphatase activity on nucleoside 5'-monophosphates. This chain is 5'-nucleotidase SurE, found in Gloeobacter violaceus (strain ATCC 29082 / PCC 7421).